The following is a 634-amino-acid chain: MTVETDKQTLGFQTEVKQLLQLMIHSLYSNKEIFLRELVSNAADAADKLRFEALVKPELLEGSGELRIRVDYDKDARTVTIDDNGIGMSREEAVSHLGTIAKSGTADFLKHLSGDQKKDANLIGQFGVGFYSAFIVADQVDVYSRRAGLPASEGVHWSSRGEGEFEIASVDKPERGTRIVLHLKEGEESFADGWTLRGILKKYSDHIGLPIEMRKEHYGEAADKPAEPEWEAVNRASALWTRPKSEIKDEEYQEFYKHIAHDAGNPLAWSHNKVEGKLEYTSLLFVPGRAPFDLYHRDSAKGLKLYVQRVFIMDQAEQFLPLYLRFIKGVVDSSDLSLNVSREILQSGPVVDSMKSALTKRSLDMLEKLAKDKPDDYATFWRNFGQALKEGPAEDYANREKIAGLLRFSSTHDTTGAQSVGLADYVSRLAEGQDKLYYLTGESYAQIKDSPHLEVFRKKGIEVLLLTDRIDEWLMSYLTEFDGKSFVDVARGDLDLGKLDSEEDKKAQEDLAKSKEGLASRIKAALGDDVAEVRVSHRLTDSPAILAIGQGDLGLQMRQLLEASGQAVPESKPVFEFNPTHPLIEKLDAEQDMDRFGDLSRVLFDQAALAAGDSLKDPAAYVRRLNKLLLELSV.

Positions 1-342 (MTVETDKQTL…SSDLSLNVSR (342 aa)) are a; substrate-binding. The interval 343-559 (EILQSGPVVD…QGDLGLQMRQ (217 aa)) is b. The interval 560–634 (LLEASGQAVP…LNKLLLELSV (75 aa)) is c.

Belongs to the heat shock protein 90 family. In terms of assembly, homodimer.

It is found in the cytoplasm. In terms of biological role, molecular chaperone. Has ATPase activity. The chain is Chaperone protein HtpG from Xanthomonas euvesicatoria pv. vesicatoria (strain 85-10) (Xanthomonas campestris pv. vesicatoria).